Reading from the N-terminus, the 113-residue chain is Large ribosomal subunit protein uL22 (113 aa).

It belongs to the universal ribosomal protein uL22 family. Part of the 50S ribosomal subunit.

This protein binds specifically to 23S rRNA; its binding is stimulated by other ribosomal proteins, e.g. L4, L17, and L20. It is important during the early stages of 50S assembly. It makes multiple contacts with different domains of the 23S rRNA in the assembled 50S subunit and ribosome. Its function is as follows. The globular domain of the protein is located near the polypeptide exit tunnel on the outside of the subunit, while an extended beta-hairpin is found that lines the wall of the exit tunnel in the center of the 70S ribosome. This Natranaerobius thermophilus (strain ATCC BAA-1301 / DSM 18059 / JW/NM-WN-LF) protein is Large ribosomal subunit protein uL22.